A 98-amino-acid polypeptide reads, in one-letter code: Large ribosomal subunit protein uL23 (98 aa).

It belongs to the universal ribosomal protein uL23 family. In terms of assembly, part of the 50S ribosomal subunit. Contacts protein L29, and trigger factor when it is bound to the ribosome.

One of the early assembly proteins it binds 23S rRNA. One of the proteins that surrounds the polypeptide exit tunnel on the outside of the ribosome. Forms the main docking site for trigger factor binding to the ribosome. The chain is Large ribosomal subunit protein uL23 from Acidothermus cellulolyticus (strain ATCC 43068 / DSM 8971 / 11B).